The primary structure comprises 253 residues: Ribosomal RNA small subunit methyltransferase A (253 aa).

The S-adenosyl-L-methionine site is built by histidine 12, leucine 14, glycine 39, glutamate 60, aspartate 81, and asparagine 104.

It belongs to the class I-like SAM-binding methyltransferase superfamily. rRNA adenine N(6)-methyltransferase family. RsmA subfamily.

It is found in the cytoplasm. It catalyses the reaction adenosine(1518)/adenosine(1519) in 16S rRNA + 4 S-adenosyl-L-methionine = N(6)-dimethyladenosine(1518)/N(6)-dimethyladenosine(1519) in 16S rRNA + 4 S-adenosyl-L-homocysteine + 4 H(+). Its function is as follows. Specifically dimethylates two adjacent adenosines (A1518 and A1519) in the loop of a conserved hairpin near the 3'-end of 16S rRNA in the 30S particle. May play a critical role in biogenesis of 30S subunits. This chain is Ribosomal RNA small subunit methyltransferase A, found in Acidovorax ebreus (strain TPSY) (Diaphorobacter sp. (strain TPSY)).